Consider the following 599-residue polypeptide: MARSTTSLFALSLVASAFARVVDYGFDVANGAVAPDGVTRNAVLVNGRFPGPLITANKGDTLKITVRNKLSDPTMRRSTTIHWHGLLQHRTAEEDGPAFVTQCPIPPQESYTYTMPLGEQTGTYWYHSHLSSQYVDGLRGPIVIYDPHDPYRNYYDVDDERTVFTLADWYHTPSEAIIATHDVLKTIPDSGTINGKGKYDPASANTNNTTLENLYTLKVKRGKRYRLRIINASAIASFRFGVQGHKCTIIEADGVLTKPIEVDAFDILAGQRYSCILKADQDPDSYWINAPITNVLNTNVQALLVYEDDKRPTHYPWKPFLTWKISNEIIQYWQHKHGSHGHKGKGHHHKVRAIGGVSGLSSRVKSRASDLSKKAVELAAALVAGEAELDKRQNEDNSTIVLDETKLIALVQPGAPGGSRPADVVVPLDFGLNFANGLWTINNVSYSPPDVPTLLKILTDKDKVDASDFTADEHTYILPKNQVVELHIKGQALGIVHPLHLHGHAFDVVQFGDNAPNYVNPPRRDVVGVTDAGVRIQFRTDNPGPWFLHCHIDWHLEEGFAMVFAEAPEDIKKGSQSVKPDGQWKKLCEKYEKLPEALQ.

The first 19 residues, 1 to 19 (MARSTTSLFALSLVASAFA), serve as a signal peptide directing secretion. Plastocyanin-like domains are found at residues 21 to 145 (VVDY…IVIY) and 157 to 307 (VDDE…LVYE). Histidine 82, histidine 84, histidine 127, and histidine 129 together coordinate Cu cation. Cysteine 103 and cysteine 588 form a disulfide bridge. Residues asparagine 207, asparagine 208, asparagine 231, asparagine 397, and asparagine 443 are each glycosylated (N-linked (GlcNAc...) asparagine). A Plastocyanin-like 3 domain is found at 450 to 567 (DVPTLLKILT…EGFAMVFAEA (118 aa)). Positions 497, 500, 502, 549, 550, 551, and 555 each coordinate Cu cation.

This sequence belongs to the multicopper oxidase family. Homodimer. Requires Cu cation as cofactor. In terms of tissue distribution, in mycelia, at a lower level than LCC4.

The protein localises to the secreted. It catalyses the reaction 4 hydroquinone + O2 = 4 benzosemiquinone + 2 H2O. Its function is as follows. Lignin degradation and detoxification of lignin-derived products. This is Laccase-2 (LCC2) from Thanatephorus cucumeris (Black scurf of potato).